The chain runs to 201 residues: Small ribosomal subunit protein uS4c (201 aa).

Positions 13-43 (RRLGDLPGLSRKAIKRPYPPGEHGQKPRKPS) are disordered. The region spanning 90–154 (MRLDNTIFRL…SKQLVESYLA (65 aa)) is the S4 RNA-binding domain.

It belongs to the universal ribosomal protein uS4 family. In terms of assembly, part of the 30S ribosomal subunit. Contacts protein S5. The interaction surface between S4 and S5 is involved in control of translational fidelity.

The protein localises to the plastid. It is found in the chloroplast. In terms of biological role, one of the primary rRNA binding proteins, it binds directly to 16S rRNA where it nucleates assembly of the body of the 30S subunit. With S5 and S12 plays an important role in translational accuracy. The sequence is that of Small ribosomal subunit protein uS4c (rps4) from Porphyra purpurea (Red seaweed).